We begin with the raw amino-acid sequence, 406 residues long: Arginine decarboxylase (406 aa).

K8 is subject to N6-(pyridoxal phosphate)lysine. Substrate is bound at residue 192–202 (VDFGGGLGIDY).

This sequence belongs to the Orn/Lys/Arg decarboxylase class-II family. SpeA subfamily. It depends on pyridoxal 5'-phosphate as a cofactor. Mg(2+) is required as a cofactor.

The enzyme catalyses L-arginine + H(+) = agmatine + CO2. It functions in the pathway amine and polyamine biosynthesis; agmatine biosynthesis; agmatine from L-arginine: step 1/1. The chain is Arginine decarboxylase (SPE2) from Theobroma cacao (Cacao).